We begin with the raw amino-acid sequence, 804 residues long: Chondroitin sulfate synthase mig-22 (804 aa).

The Cytoplasmic portion of the chain corresponds to 1-6; it reads MVGGGR. Residues 7–27 traverse the membrane as a helical; Signal-anchor for type II membrane protein segment; the sequence is TGIHLLLGFLIGAALALFFFS. Topologically, residues 28–804 are lumenal; it reads STPSIDLTSS…QLAKLLFHEK (777 aa). N-linked (GlcNAc...) asparagine glycans are attached at residues asparagine 123, asparagine 172, and asparagine 268.

The protein belongs to the chondroitin N-acetylgalactosaminyltransferase family. Interacts with sqv-5. A divalent metal cation serves as cofactor. Expressed in seam cells, the vulval epithelium and in oocytes (at protein level).

It is found in the golgi apparatus. The protein localises to the golgi stack membrane. It carries out the reaction 3-O-(beta-D-GlcA-(1-&gt;3)-beta-D-GalNAc-(1-&gt;4)-beta-D-GlcA-(1-&gt;3)-beta-D-Gal-(1-&gt;3)-beta-D-Gal-(1-&gt;4)-beta-D-Xyl)-L-seryl-[protein] + UDP-N-acetyl-alpha-D-galactosamine = 3-O-(beta-D-GalNAc-(1-&gt;4)-beta-D-GlcA-(1-&gt;3)-beta-D-GalNAc-(1-&gt;4)-beta-D-GlcA-(1-&gt;3)-beta-D-Gal-(1-&gt;3)-beta-D-Gal-(1-&gt;4)-beta-D-Xyl)-L-seryl-[protein] + UDP + H(+). The catalysed reaction is 3-O-{beta-D-GlcA-(1-&gt;3)-[beta-D-GalNAc-(1-&gt;4)-beta-D-GlcA-(1-&gt;3)](n)-beta-D-GalNAc-(1-&gt;4)-beta-D-GlcA-(1-&gt;3)-beta-D-Gal-(1-&gt;3)-beta-D-Gal-(1-&gt;4)-beta-D-Xyl}-L-seryl-[protein] + UDP-N-acetyl-alpha-D-galactosamine = 3-O-{[beta-D-GalNAc-(1-&gt;4)-beta-D-GlcA-(1-&gt;3)](n+1)-beta-D-GalNAc-(1-&gt;4)-beta-D-GlcA-(1-&gt;3)-beta-D-Gal-(1-&gt;3)-beta-D-Gal-(1-&gt;4)-beta-D-Xyl}-L-seryl-[protein] + UDP + H(+). The enzyme catalyses 3-O-(beta-D-GalNAc-(1-&gt;4)-beta-D-GlcA-(1-&gt;3)-beta-D-Gal-(1-&gt;3)-beta-D-Gal-(1-&gt;4)-beta-D-Xyl)-L-seryl-[protein] + UDP-alpha-D-glucuronate = 3-O-(beta-D-GlcA-(1-&gt;3)-beta-D-GalNAc-(1-&gt;4)-beta-D-GlcA-(1-&gt;3)-beta-D-Gal-(1-&gt;3)-beta-D-Gal-(1-&gt;4)-beta-D-Xyl)-L-seryl-[protein] + UDP + H(+). It catalyses the reaction 3-O-{[beta-D-GalNAc-(1-&gt;4)-beta-D-GlcA-(1-&gt;3)](n)-beta-D-GalNAc-(1-&gt;4)-beta-D-GlcA-(1-&gt;3)-beta-D-Gal-(1-&gt;3)-beta-D-Gal-(1-&gt;4)-beta-D-Xyl}-L-seryl-[protein] + UDP-alpha-D-glucuronate = 3-O-{beta-D-GlcA-(1-&gt;3)-[beta-D-GalNAc-(1-&gt;4)-beta-D-GlcA-(1-&gt;3)](n)-beta-D-GalNAc-(1-&gt;4)-beta-D-GlcA-(1-&gt;3)-beta-D-Gal-(1-&gt;3)-beta-D-Gal-(1-&gt;4)-beta-D-Xyl}-L-seryl-[protein] + UDP + H(+). Has both beta-1,3-glucuronic acid and beta-1,4-N-acetylgalactosamine transferase activity. Transfers glucuronic acid (GlcUA) from UDP-GlcUA and N-acetylgalactosamine (GalNAc) from UDP-GalNAc to the non-reducing end of the elongating chondroitin polymer. Required together with sqv-5 for the biosynthesis of chondroitin. Chondroitin is involved in organogenesis of the vulva, maturation of the gonad, and neural development. May have a specific role in unc-6/netrin-mediated dorsal guidance of gonadal distal tip cells. Glycosyltransferase activity is weak. The polypeptide is Chondroitin sulfate synthase mig-22 (mig-22) (Caenorhabditis elegans).